Consider the following 738-residue polypeptide: Pentatricopeptide repeat-containing protein At5g65570 (738 aa).

13 PPR repeats span residues 98–128 (AEIS…MSER), 129–163 (HIVT…NVLP), 164–198 (DEYT…GLEV), 200–230 (NVFV…VEEK), 231–265 (DVVL…KVQP), 266–300 (NEYT…GFES), 301–331 (ALAS…IEYP), 332–366 (NQVS…SIKP), 367–401 (NSFT…GFDR), 402–432 (DKYA…LSEV), 433–467 (DVIS…GLQP), 468–502 (NDVT…KIML), and 503–537 (TNDH…DLVL). The segment at 537-612 (LWRTLLSACK…NPAMSWVEIN (76 aa)) is type E motif. A type E(+) motif region spans residues 613–644 (KETHTFMAGDLFSHPNSEQILENLEELIKKSK). The tract at residues 645–738 (DLGYVEDKSC…DGSCSCGDYW (94 aa)) is type DYW motif.

Belongs to the PPR family. PCMP-H subfamily.

In Arabidopsis thaliana (Mouse-ear cress), this protein is Pentatricopeptide repeat-containing protein At5g65570 (PCMP-H47).